Consider the following 395-residue polypeptide: uncharacterized protein (395 aa).

Transmembrane regions (helical) follow at residues 42–62, 67–87, 97–117, 128–148, 196–216, 241–261, and 281–301; these read LKYV…LIFI, LYSF…FVLL, LIFN…LIIF, ILST…SIIP, FIYA…LYIL, ILFY…SFVA, and LFFS…GTVV.

It is found in the cell membrane. This is an uncharacterized protein from Mycoplasma genitalium (strain ATCC 33530 / DSM 19775 / NCTC 10195 / G37) (Mycoplasmoides genitalium).